A 339-amino-acid chain; its full sequence is RNA polymerase principal sigma factor HrdC (339 aa).

Residues 1–10 show a composition bias toward low complexity; it reads MAPTARTPTA. Disordered stretches follow at residues 1-37 and 71-101; these read MAPTARTPTARTRDDRRATTRTARLRTRIPEPDEEPD and REELETADTGEPAPTPRRRRTLEETVHDGQE. Positions 91–101 are enriched in basic and acidic residues; that stretch reads TLEETVHDGQE. The Polymerase core binding motif lies at 130–143; sequence DVIQEGNLGLIRAV. The H-T-H motif DNA-binding region spans 300-319; that stretch reads LQQVAQHVGLTRERVRQLEK.

This sequence belongs to the sigma-70 factor family. Interacts transiently with the RNA polymerase catalytic core.

Functionally, sigma factors are initiation factors that promote the attachment of RNA polymerase to specific initiation sites and are then released. The protein is RNA polymerase principal sigma factor HrdC (hrdC) of Streptomyces coelicolor (strain ATCC BAA-471 / A3(2) / M145).